We begin with the raw amino-acid sequence, 230 residues long: Thioredoxin domain-containing protein PLP3B (230 aa).

In terms of domain architecture, Thioredoxin spans 89-173 (VSEGDFLGEV…GIAMDRLVGF (85 aa)). A disordered region spans residues 199–230 (EKRKEEDEEDYEYQESIRRSVRSSANVDSDSD). Polar residues predominate over residues 220–230 (RSSANVDSDSD).

This sequence belongs to the phosducin family. In terms of assembly, interacts with TUBB2, TUBB3, TUBB4 and TUBB5. Expressed in roots, cotyledons, leaves, stems and flowers.

It is found in the cytoplasm. Its subcellular location is the nucleus. In terms of biological role, tubulin-binding protein involved in microtubule formation. This is Thioredoxin domain-containing protein PLP3B (PLP3B) from Arabidopsis thaliana (Mouse-ear cress).